Consider the following 141-residue polypeptide: Large ribosomal subunit protein uL22 (141 aa).

The protein belongs to the universal ribosomal protein uL22 family. As to quaternary structure, part of the 50S ribosomal subunit.

This protein binds specifically to 23S rRNA; its binding is stimulated by other ribosomal proteins, e.g. L4, L17, and L20. It is important during the early stages of 50S assembly. It makes multiple contacts with different domains of the 23S rRNA in the assembled 50S subunit and ribosome. Functionally, the globular domain of the protein is located near the polypeptide exit tunnel on the outside of the subunit, while an extended beta-hairpin is found that lines the wall of the exit tunnel in the center of the 70S ribosome. This Frankia casuarinae (strain DSM 45818 / CECT 9043 / HFP020203 / CcI3) protein is Large ribosomal subunit protein uL22.